We begin with the raw amino-acid sequence, 131 residues long: Small ribosomal subunit protein uS12 (131 aa).

A disordered region spans residues 1–22 (MPTTQQLLRKGRKVLQKKSKVP). Basic residues predominate over residues 9–20 (RKGRKVLQKKSK). The residue at position 89 (aspartate 89) is a 3-methylthioaspartic acid. The tract at residues 102–131 (LDTQGVKDRNKSRSKYGTKKPKAGAAAAKK) is disordered. The segment covering 113–131 (SRSKYGTKKPKAGAAAAKK) has biased composition (basic residues).

The protein belongs to the universal ribosomal protein uS12 family. As to quaternary structure, part of the 30S ribosomal subunit. Contacts proteins S8 and S17. May interact with IF1 in the 30S initiation complex.

Its function is as follows. With S4 and S5 plays an important role in translational accuracy. Interacts with and stabilizes bases of the 16S rRNA that are involved in tRNA selection in the A site and with the mRNA backbone. Located at the interface of the 30S and 50S subunits, it traverses the body of the 30S subunit contacting proteins on the other side and probably holding the rRNA structure together. The combined cluster of proteins S8, S12 and S17 appears to hold together the shoulder and platform of the 30S subunit. This chain is Small ribosomal subunit protein uS12, found in Deinococcus radiodurans (strain ATCC 13939 / DSM 20539 / JCM 16871 / CCUG 27074 / LMG 4051 / NBRC 15346 / NCIMB 9279 / VKM B-1422 / R1).